A 194-amino-acid polypeptide reads, in one-letter code: Chromophore lyase CpcT/CpeT 1 (194 aa).

This sequence belongs to the CpcT/CpeT biliprotein lyase family.

Covalently attaches a chromophore to Cys residue(s) of phycobiliproteins. The polypeptide is Chromophore lyase CpcT/CpeT 1 (Microcystis aeruginosa (strain NIES-843 / IAM M-2473)).